The sequence spans 150 residues: D-aminoacyl-tRNA deacylase (150 aa).

The Gly-cisPro motif, important for rejection of L-amino acids signature appears at 138-139; sequence GP.

Belongs to the DTD family. In terms of assembly, homodimer.

It is found in the cytoplasm. The catalysed reaction is glycyl-tRNA(Ala) + H2O = tRNA(Ala) + glycine + H(+). It catalyses the reaction a D-aminoacyl-tRNA + H2O = a tRNA + a D-alpha-amino acid + H(+). In terms of biological role, an aminoacyl-tRNA editing enzyme that deacylates mischarged D-aminoacyl-tRNAs. Also deacylates mischarged glycyl-tRNA(Ala), protecting cells against glycine mischarging by AlaRS. Acts via tRNA-based rather than protein-based catalysis; rejects L-amino acids rather than detecting D-amino acids in the active site. By recycling D-aminoacyl-tRNA to D-amino acids and free tRNA molecules, this enzyme counteracts the toxicity associated with the formation of D-aminoacyl-tRNA entities in vivo and helps enforce protein L-homochirality. The protein is D-aminoacyl-tRNA deacylase of Chlorobaculum tepidum (strain ATCC 49652 / DSM 12025 / NBRC 103806 / TLS) (Chlorobium tepidum).